The following is a 223-amino-acid chain: Urease accessory protein UreF (223 aa).

Belongs to the UreF family. As to quaternary structure, ureD, UreF and UreG form a complex that acts as a GTP-hydrolysis-dependent molecular chaperone, activating the urease apoprotein by helping to assemble the nickel containing metallocenter of UreC. The UreE protein probably delivers the nickel.

Its subcellular location is the cytoplasm. In terms of biological role, required for maturation of urease via the functional incorporation of the urease nickel metallocenter. The protein is Urease accessory protein UreF of Sinorhizobium medicae (strain WSM419) (Ensifer medicae).